Consider the following 153-residue polypeptide: Small ribosomal subunit protein uS9 (153 aa).

The span at Met-1–Asp-19 shows a compositional bias: low complexity. 2 disordered regions span residues Met-1–Val-23 and Leu-121–Arg-153. Residues Arg-129–Lys-138 show a composition bias toward basic and acidic residues. Residues Tyr-139–Arg-153 are compositionally biased toward basic residues.

Belongs to the universal ribosomal protein uS9 family.

This is Small ribosomal subunit protein uS9 from Saccharopolyspora erythraea (strain ATCC 11635 / DSM 40517 / JCM 4748 / NBRC 13426 / NCIMB 8594 / NRRL 2338).